Here is a 692-residue protein sequence, read N- to C-terminus: Acyl-coenzyme A oxidase 2, peroxisomal (692 aa).

A peroxisome-targeting transit peptide spans methionine 1–cysteine 49. Residues threonine 186, serine 192, glycine 225, arginine 365, glutamine 384, glycine 452, and threonine 473 each contribute to the FAD site. The active-site Proton acceptor is the glutamate 475. Aspartate 477 provides a ligand contact to FAD.

Belongs to the acyl-CoA oxidase family. As to quaternary structure, homodimer. Requires FAD as cofactor. Expressed mainly in flowers and young seedlings. Lower expression in roots, leaves and bracts.

The protein resides in the peroxisome. It carries out the reaction a 2,3-saturated acyl-CoA + O2 = a (2E)-enoyl-CoA + H2O2. Its function is as follows. Catalyzes the desaturation of long-chain acyl-CoAs to 2-trans-enoyl-CoAs. Active on substrates longer than C14 and mostly with C18-CoA. Activity on long-chain mono-unsaturated substrates is double than with the corresponding saturated substrates. This Arabidopsis thaliana (Mouse-ear cress) protein is Acyl-coenzyme A oxidase 2, peroxisomal.